The chain runs to 172 residues: Translation initiation factor IF-3 (172 aa).

Belongs to the IF-3 family. Monomer.

Its subcellular location is the cytoplasm. In terms of biological role, IF-3 binds to the 30S ribosomal subunit and shifts the equilibrium between 70S ribosomes and their 50S and 30S subunits in favor of the free subunits, thus enhancing the availability of 30S subunits on which protein synthesis initiation begins. In Thermotoga maritima (strain ATCC 43589 / DSM 3109 / JCM 10099 / NBRC 100826 / MSB8), this protein is Translation initiation factor IF-3.